A 447-amino-acid chain; its full sequence is GTPase Der (447 aa).

EngA-type G domains follow at residues 3–167 (PVIA…QLPE) and 180–353 (IRLA…KAAT). GTP is bound by residues 9 to 16 (GRPNVGKS), 56 to 60 (DTGGF), 119 to 122 (NKAE), 186 to 193 (GRPNVGKS), 233 to 237 (DTAGL), and 298 to 301 (NKWD). The KH-like domain maps to 353–438 (TCKMPTPVLT…PLRIEMKTSR (86 aa)).

Belongs to the TRAFAC class TrmE-Era-EngA-EngB-Septin-like GTPase superfamily. EngA (Der) GTPase family. Associates with the 50S ribosomal subunit.

Its function is as follows. GTPase that plays an essential role in the late steps of ribosome biogenesis. The chain is GTPase Der from Paracidovorax citrulli (strain AAC00-1) (Acidovorax citrulli).